The sequence spans 164 residues: Thiol peroxidase (164 aa).

In terms of domain architecture, Thioredoxin spans 18-163 (INEGDFAPDF…FDAALAAYKN (146 aa)). Residue Cys60 is the Cysteine sulfenic acid (-SOH) intermediate of the active site. Cys60 and Cys93 are oxidised to a cystine.

Belongs to the peroxiredoxin family. Tpx subfamily. In terms of assembly, homodimer.

The enzyme catalyses a hydroperoxide + [thioredoxin]-dithiol = an alcohol + [thioredoxin]-disulfide + H2O. Its function is as follows. Thiol-specific peroxidase that catalyzes the reduction of hydrogen peroxide and organic hydroperoxides to water and alcohols, respectively. Plays a role in cell protection against oxidative stress by detoxifying peroxides. In Staphylococcus aureus (strain MRSA252), this protein is Thiol peroxidase.